Reading from the N-terminus, the 853-residue chain is Wolframin (853 aa).

The disordered stretch occupies residues 139 to 179; sequence KQLERKMRRIYNLQRKRRRRDDDRSSSSSEGEQEPECEPLE. A compositionally biased stretch (basic residues) spans 144-157; sequence KMRRIYNLQRKRRR. Acidic residues predominate over residues 169–179; that stretch reads GEQEPECEPLE. Transmembrane regions (helical) follow at residues 238–258, 259–279, 285–305, 347–367, 373–393, 446–466, 473–493, 513–533, 545–565, and 572–592; these read MIFH…NLIV, SIPN…ISWW, LPLV…CKML, LYFF…TDAW, LTII…YASS, FCLN…IMMA, GVYT…VCIA, IVLF…FVAI, WGST…LALN, and ITML…LPYM. 2 N-linked (GlcNAc...) asparagine glycosylation sites follow: Asn694 and Asn769.

In terms of tissue distribution, detected in adult brain.

It is found in the membrane. The protein localises to the endoplasmic reticulum. Its subcellular location is the mitochondrion. In terms of biological role, participates in the regulation of cellular Ca(2+) homeostasis, at least partly, by modulating the filling state of the endoplasmic reticulum Ca(2+) store. In neurons and glial cells, has a role in maintaining neuronal function and integrity during aging. The polypeptide is Wolframin (Drosophila melanogaster (Fruit fly)).